A 305-amino-acid polypeptide reads, in one-letter code: Putative beta-lactamase HcpD (305 aa).

Residues 1 to 27 (MIKSWTKKWFLILFLMASCFGHLVATT) form the signal peptide. TPR repeat units follow at residues 28–61 (GEKY…RMGV), 96–133 (HLAC…KGGV), 168–205 (GISC…KDGA), and 240–277 (GSGC…GFSG). Intrachain disulfides connect cysteine 55–cysteine 63, cysteine 91–cysteine 99, cysteine 127–cysteine 135, cysteine 163–cysteine 171, cysteine 199–cysteine 207, cysteine 235–cysteine 243, and cysteine 271–cysteine 279.

Belongs to the hcp beta-lactamase family.

It localises to the secreted. The enzyme catalyses a beta-lactam + H2O = a substituted beta-amino acid. In terms of biological role, may hydrolyze 6-aminopenicillinic acid and 7-aminocephalosporanic acid (ACA) derivatives. Binds to penicillin. The chain is Putative beta-lactamase HcpD (hcpD) from Helicobacter pylori (strain J99 / ATCC 700824) (Campylobacter pylori J99).